Here is a 341-residue protein sequence, read N- to C-terminus: Phosphoribosylformylglycinamidine cyclo-ligase (341 aa).

The protein belongs to the AIR synthase family.

The protein resides in the cytoplasm. The catalysed reaction is 2-formamido-N(1)-(5-O-phospho-beta-D-ribosyl)acetamidine + ATP = 5-amino-1-(5-phospho-beta-D-ribosyl)imidazole + ADP + phosphate + H(+). The protein operates within purine metabolism; IMP biosynthesis via de novo pathway; 5-amino-1-(5-phospho-D-ribosyl)imidazole from N(2)-formyl-N(1)-(5-phospho-D-ribosyl)glycinamide: step 2/2. This is Phosphoribosylformylglycinamidine cyclo-ligase from Xanthomonas axonopodis pv. citri (strain 306).